The chain runs to 515 residues: Protein translocase subunit SecD (515 aa).

A helical membrane pass occupies residues 6–26 (LYSLIFIIILTAFAVWVDLPG). The tract at residues 141–186 (AITNGNQNQNSTKNGTPTPGTTPTPESTPQANQTPVAANVTPTPED) is disordered. The span at 150–169 (NSTKNGTPTPGTTPTPESTP) shows a compositional bias: low complexity. Positions 170–186 (QANQTPVAANVTPTPED) are enriched in polar residues. 5 helical membrane-spanning segments follow: residues 322–342 (RSIRAGLIGIGAVALFMILYY), 344–364 (LPGFVSVVALAIYAAVVFALF), 367–387 (IPVTLTLAGIAGFILSVGMAV), 427–447 (ISTLITCAILIWFGSRFGASV), and 450–470 (GFAITLAIGVIVSMFTAIFVT).

It belongs to the SecD/SecF family. SecD subfamily. In terms of assembly, forms a complex with SecF. Part of the essential Sec protein translocation apparatus which comprises SecA, SecYEG and auxiliary proteins SecDF. Other proteins may also be involved.

Its subcellular location is the cell membrane. In terms of biological role, part of the Sec protein translocase complex. Interacts with the SecYEG preprotein conducting channel. SecDF uses the proton motive force (PMF) to complete protein translocation after the ATP-dependent function of SecA. The chain is Protein translocase subunit SecD from Thermobaculum terrenum (strain ATCC BAA-798 / CCMEE 7001 / YNP1).